The chain runs to 275 residues: Light-independent protochlorophyllide reductase iron-sulfur ATP-binding protein (275 aa).

Residues 12 to 17 (GIGKST) and Lys41 each bind ATP. Ser16 contributes to the Mg(2+) binding site. [4Fe-4S] cluster contacts are provided by Cys97 and Cys131. 182 to 183 (NR) contributes to the ATP binding site.

The protein belongs to the NifH/BchL/ChlL family. In terms of assembly, homodimer. Protochlorophyllide reductase is composed of three subunits; BchL, BchN and BchB. It depends on [4Fe-4S] cluster as a cofactor.

It catalyses the reaction chlorophyllide a + oxidized 2[4Fe-4S]-[ferredoxin] + 2 ADP + 2 phosphate = protochlorophyllide a + reduced 2[4Fe-4S]-[ferredoxin] + 2 ATP + 2 H2O. The protein operates within porphyrin-containing compound metabolism; bacteriochlorophyll biosynthesis (light-independent). Component of the dark-operative protochlorophyllide reductase (DPOR) that uses Mg-ATP and reduced ferredoxin to reduce ring D of protochlorophyllide (Pchlide) to form chlorophyllide a (Chlide). This reaction is light-independent. The L component serves as a unique electron donor to the NB-component of the complex, and binds Mg-ATP. This is Light-independent protochlorophyllide reductase iron-sulfur ATP-binding protein from Prosthecochloris aestuarii (strain DSM 271 / SK 413).